The sequence spans 165 residues: Putative 4-hydroxy-4-methyl-2-oxoglutarate aldolase (165 aa).

Residues 80–83 (GGNL) and arginine 102 contribute to the substrate site. Residue aspartate 103 coordinates a divalent metal cation.

It belongs to the class II aldolase/RraA-like family. Homotrimer. The cofactor is a divalent metal cation.

It carries out the reaction 4-hydroxy-4-methyl-2-oxoglutarate = 2 pyruvate. The enzyme catalyses oxaloacetate + H(+) = pyruvate + CO2. Functionally, catalyzes the aldol cleavage of 4-hydroxy-4-methyl-2-oxoglutarate (HMG) into 2 molecules of pyruvate. Also contains a secondary oxaloacetate (OAA) decarboxylase activity due to the common pyruvate enolate transition state formed following C-C bond cleavage in the retro-aldol and decarboxylation reactions. The polypeptide is Putative 4-hydroxy-4-methyl-2-oxoglutarate aldolase (Cupriavidus taiwanensis (strain DSM 17343 / BCRC 17206 / CCUG 44338 / CIP 107171 / LMG 19424 / R1) (Ralstonia taiwanensis (strain LMG 19424))).